The chain runs to 154 residues: 20 kDa calcium-binding protein (154 aa).

EF-hand domains lie at 13–48 (DQVK…LNLT), 49–84 (VKPD…KLQE), 86–121 (QDER…LGDD), and 122–154 (LTEE…MTSE). Positions 62, 64, 66, 99, 101, 105, 110, 135, 137, 139, and 146 each coordinate Ca(2+).

Its subcellular location is the tegument membrane. In terms of biological role, calcium-binding protein. This is 20 kDa calcium-binding protein (SM20) from Schistosoma mansoni (Blood fluke).